A 538-amino-acid polypeptide reads, in one-letter code: ATP synthase subunit beta 2 (538 aa).

A compositionally biased stretch (polar residues) spans 1–10 (MADPQATNGT). Residues 1 to 30 (MADPQATNGTGAACAERDASDVGDVSDVGD) are disordered. Residue 185–192 (GGAGVGKT) coordinates ATP. The segment covering 494–505 (AAAREADARREA) has biased composition (basic and acidic residues). Residues 494-538 (AAAREADARREAAAAASVAGPGTTSGTTSDPASGSAEPQGARHGR) are disordered. A compositionally biased stretch (low complexity) spans 506–529 (AAAASVAGPGTTSGTTSDPASGSA).

It belongs to the ATPase alpha/beta chains family. F-type ATPases have 2 components, CF(1) - the catalytic core - and CF(0) - the membrane proton channel. CF(1) has five subunits: alpha(3), beta(3), gamma(1), delta(1), epsilon(1). CF(0) has three main subunits: a(1), b(2) and c(9-12). The alpha and beta chains form an alternating ring which encloses part of the gamma chain. CF(1) is attached to CF(0) by a central stalk formed by the gamma and epsilon chains, while a peripheral stalk is formed by the delta and b chains.

Its subcellular location is the cell inner membrane. It carries out the reaction ATP + H2O + 4 H(+)(in) = ADP + phosphate + 5 H(+)(out). Functionally, produces ATP from ADP in the presence of a proton gradient across the membrane. The catalytic sites are hosted primarily by the beta subunits. The protein is ATP synthase subunit beta 2 of Burkholderia pseudomallei (strain K96243).